Here is a 295-residue protein sequence, read N- to C-terminus: G1/S-specific cyclin-D1 (295 aa).

One can recognise a Cyclin N-terminal domain in the interval 28–152; it reads LRAMLKAEET…VLVNKLKWNL (125 aa). Residues 264-295 form a disordered region; sequence QQNLDPKAAEEEEEEEEVDLACTPTDVRDVNI. Lys-270 is covalently cross-linked (Glycyl lysine isopeptide (Lys-Gly) (interchain with G-Cter in ubiquitin)). Residues 273-282 show a composition bias toward acidic residues; sequence EEEEEEEEVD. Thr-286 is subject to Phosphothreonine.

The protein belongs to the cyclin family. Cyclin D subfamily. Interacts with either CDK4 or CDK6 protein kinase to form a serine/threonine kinase holoenzyme complex. The cyclin subunit imparts substrate specificity to the complex. Component of the ternary complex CCND1/CDK4/CDKN1B required for nuclear translocation and modulation of CDK4-mediated kinase activity. Interacts directly with CDKN1B. Can form similar complexes with either CDKN1A or CDKN2A. Interacts with UHRF2; the interaction ubiquitinates CCND1 and appears to occur independently of phosphorylation. Interacts with USP2. Interacts (via cyclin N-terminal domain) with INSM1 (via N-terminal region); the interaction competes with the binding of CCND1 to CDK4 during cell cycle progression and inhibits CDK4 activity. Interacts with CDK4; the interaction is prevented with the binding of CCND1 to INSM1 during cell cycle progression. Phosphorylation at Thr-286 by MAP kinases is required for ubiquitination and degradation by the DCX(AMBRA1) complex. It also plays an essential role for recognition by the FBXO31 component of SCF (SKP1-cullin-F-box) protein ligase complex following DNA damage. In terms of processing, ubiquitinated at Lys-270 by the DCX(AMBRA1) complex during the transition from G1 to S cell phase, leading to its degradation: ubiquitination is dependent on Thr-286 phosphorylation. The DCX(AMBRA1) complex represents the major regulator of CCND1 stability during the G1/S transition. Also ubiquitinated by the SCF(FBXO4) and Cul7-RING(FBXW8) ubiquitin-protein ligase complexes. Following DNA damage it is ubiquitinated by the SCF(FBXO31) protein ligase complex. SCF(FBXO31) ubiquitination is dependent on Thr-286 phosphorylation. Ubiquitinated also by UHRF2 apparently in a phosphorylation-independent manner. Ubiquitination leads to its degradation and G1 arrest. Deubiquitinated by USP2; leading to its stabilization.

The protein localises to the nucleus. Its subcellular location is the cytoplasm. The protein resides in the nucleus membrane. Its function is as follows. Regulatory component of the cyclin D1-CDK4 (DC) complex that phosphorylates and inhibits members of the retinoblastoma (RB) protein family including RB1 and regulates the cell-cycle during G(1)/S transition. Phosphorylation of RB1 allows dissociation of the transcription factor E2F from the RB/E2F complex and the subsequent transcription of E2F target genes which are responsible for the progression through the G(1) phase. Hypophosphorylates RB1 in early G(1) phase. Cyclin D-CDK4 complexes are major integrators of various mitogenenic and antimitogenic signals. Also a substrate for SMAD3, phosphorylating SMAD3 in a cell-cycle-dependent manner and repressing its transcriptional activity. Component of the ternary complex, cyclin D1/CDK4/CDKN1B, required for nuclear translocation and activity of the cyclin D-CDK4 complex. Exhibits transcriptional corepressor activity with INSM1 on the NEUROD1 and INS promoters in a cell cycle-independent manner. In Bos taurus (Bovine), this protein is G1/S-specific cyclin-D1 (CCND1).